A 378-amino-acid chain; its full sequence is Uroporphyrinogen decarboxylase (378 aa).

Substrate is bound by residues 40–44 (RQAGR), D90, Y167, S222, and H355.

The protein belongs to the uroporphyrinogen decarboxylase family. In terms of assembly, homodimer.

It localises to the cytoplasm. It carries out the reaction uroporphyrinogen III + 4 H(+) = coproporphyrinogen III + 4 CO2. It participates in porphyrin-containing compound metabolism; protoporphyrin-IX biosynthesis; coproporphyrinogen-III from 5-aminolevulinate: step 4/4. Its function is as follows. Catalyzes the decarboxylation of four acetate groups of uroporphyrinogen-III to yield coproporphyrinogen-III. The polypeptide is Uroporphyrinogen decarboxylase (Psychrobacter arcticus (strain DSM 17307 / VKM B-2377 / 273-4)).